Here is a 290-residue protein sequence, read N- to C-terminus: N-acetylmannosamine kinase (290 aa).

Residues 6 to 13 (ALDIGGTK) and 132 to 139 (GVGGGIIL) contribute to the ATP site. The Zn(2+) site is built by His156, Cys166, Cys168, and Cys173.

The protein belongs to the ROK (NagC/XylR) family. NanK subfamily. As to quaternary structure, homodimer.

It catalyses the reaction an N-acyl-D-mannosamine + ATP = an N-acyl-D-mannosamine 6-phosphate + ADP + H(+). The protein operates within amino-sugar metabolism; N-acetylneuraminate degradation; D-fructose 6-phosphate from N-acetylneuraminate: step 2/5. In terms of biological role, catalyzes the phosphorylation of N-acetylmannosamine (ManNAc) to ManNAc-6-P. This is N-acetylmannosamine kinase from Yersinia pseudotuberculosis serotype O:3 (strain YPIII).